Reading from the N-terminus, the 114-residue chain is Large ribosomal subunit protein uL22 (114 aa).

It belongs to the universal ribosomal protein uL22 family. In terms of assembly, part of the 50S ribosomal subunit.

Its function is as follows. This protein binds specifically to 23S rRNA; its binding is stimulated by other ribosomal proteins, e.g. L4, L17, and L20. It is important during the early stages of 50S assembly. It makes multiple contacts with different domains of the 23S rRNA in the assembled 50S subunit and ribosome. The globular domain of the protein is located near the polypeptide exit tunnel on the outside of the subunit, while an extended beta-hairpin is found that lines the wall of the exit tunnel in the center of the 70S ribosome. The polypeptide is Large ribosomal subunit protein uL22 (Ehrlichia chaffeensis (strain ATCC CRL-10679 / Arkansas)).